Reading from the N-terminus, the 128-residue chain is Protein ripply2 (128 aa).

The segment at 1-63 is disordered; it reads MENAGGAEGT…HAAEAMPDGP (63 aa). The span at 9–22 shows a compositional bias: low complexity; sequence GTESGAAACAATDG. The WRPW motif signature appears at 37 to 40; it reads WRPW. Positions 77 to 112 are ripply homology domain; it reads HPVRLFWPKSKCYDYLYQEAEALLKNFPIQATISFY.

This sequence belongs to the ripply family.

Its subcellular location is the nucleus. In terms of biological role, plays a role in somitogenesis. Required for somite segregation and establishment of rostrocaudal polarity in somites. The sequence is that of Protein ripply2 (RIPPLY2) from Homo sapiens (Human).